A 518-amino-acid polypeptide reads, in one-letter code: MSQNADKIVDHFNLFKQPDYQEMFKNKQKTFENRLPADQVARGQEWTKTWEYREKNFAREALSVNPDKACQPLGRIFARGFDGTRPFVHGSQGCVAYFRSHFNRHFKEPSSCVSSSMTEDPAVFGGLNNMIDGLAISYSLYKPKMIAVSTTCMAEVIGDDLNAFIKTAKEKGNVPESFDVPFAHTPSFVGSHITGYDNMMKGILTHFWDGKAGTVPALERKPDEKINFIGGFDGYTVGNMREIKRLFSLMNVDYTILGDGSDVWDTPADGEFRMYDGGTTFAEAEAALNAKATVCMQGISTEKTMAYIQEKGQEVVALHCPIGVTGTDHFLQEVSGISGKPISEELKKERGRLVDAIGTSISYLHGKKFAIKGDPDFCLGVAGFLLELGAEPVHVVCTRGNKDWAEKMNALFASSPFGTGCHAYPGKDLWHMRSLVFTEPVDFLIGNSYTKYLERDTGTPMIHIGFPIHDRHHHHRYPIWGYQGAVNVLVWILDRIHLELDRNTLGIGTTDFSYDLVR.

[8Fe-7S] cluster-binding residues include C70, C94, C152, and S187.

It belongs to the NifD/NifK/NifE/NifN family. As to quaternary structure, tetramer of two alpha and two beta chains. Forms complex with the iron protein (nitrogenase component 2). [8Fe-7S] cluster serves as cofactor.

The catalysed reaction is N2 + 8 reduced [2Fe-2S]-[ferredoxin] + 16 ATP + 16 H2O = H2 + 8 oxidized [2Fe-2S]-[ferredoxin] + 2 NH4(+) + 16 ADP + 16 phosphate + 6 H(+). Its function is as follows. This molybdenum-iron protein is part of the nitrogenase complex that catalyzes the key enzymatic reactions in nitrogen fixation. In Acidithiobacillus ferridurans, this protein is Nitrogenase molybdenum-iron protein beta chain (nifK).